Consider the following 466-residue polypeptide: Alpha-1A adrenergic receptor (466 aa).

Residues 1-25 (MVFLSGNASDSSNCTHPPAPVNISK) lie on the Extracellular side of the membrane. 3 N-linked (GlcNAc...) asparagine glycosylation sites follow: asparagine 7, asparagine 13, and asparagine 22. A helical transmembrane segment spans residues 26 to 51 (AILLGVILGGLILFGVLGNILVILSV). The Cytoplasmic segment spans residues 52–63 (ACHRHLHSVTHY). The helical transmembrane segment at 64–89 (YIVNLAVADLLLTSTVLPFSAIFEIL) threads the bilayer. The Extracellular portion of the chain corresponds to 90-99 (GYWAFGRVFC). A helical membrane pass occupies residues 100–122 (NIWAAVDVLCCTASIISLCVISI). The Cytoplasmic portion of the chain corresponds to 123–143 (DRYIGVSYPLRYPTIVTQRRG). A helical transmembrane segment spans residues 144–168 (LRALLCVWAFSLVISVGPLFGWRQP). Topologically, residues 169 to 181 (APDDETICQINEE) are extracellular. Residues 182–205 (PGYVLFSALGSFYVPLTIILAMYC) form a helical membrane-spanning segment. Over 206 to 272 (RVYVVAKRES…KFSREKKAAK (67 aa)) the chain is Cytoplasmic. A helical transmembrane segment spans residues 273 to 297 (TLGIVVGCFVLCWLPFFLVMPIGSF). Over 298–304 (FPDFKPP) the chain is Extracellular. A helical transmembrane segment spans residues 305–329 (ETVFKIVFWLGYLNSCINPIIYPCS). Over 330-466 (SQEFKKAFQN…ISLSENGEEV (137 aa)) the chain is Cytoplasmic. Residues 334–349 (KKAFQNVLKIQCLRRK) carry the Nuclear localization signal motif. The S-palmitoyl cysteine moiety is linked to residue cysteine 345.

It belongs to the G-protein coupled receptor 1 family. Adrenergic receptor subfamily. ADRA1A sub-subfamily. As to quaternary structure, homo- and heterooligomer. Heterooligomerizes with ADRA1B homooligomers in cardiac myocytes. Interacts with CAVIN4. As to expression, abundant in liver, vas deferens, brain, and aorta, but not in heart.

The protein localises to the nucleus membrane. The protein resides in the cell membrane. It localises to the cytoplasm. Its subcellular location is the membrane. It is found in the caveola. In terms of biological role, this alpha-adrenergic receptor mediates its action by association with G proteins that activate a phosphatidylinositol-calcium second messenger system. Its effect is mediated by G(q) and G(11) proteins. Nuclear ADRA1A-ADRA1B heterooligomers regulate phenylephrine (PE)-stimulated ERK signaling in cardiac myocytes. This chain is Alpha-1A adrenergic receptor (ADRA1A), found in Oryctolagus cuniculus (Rabbit).